The primary structure comprises 749 residues: Patatin-like phospholipase domain-containing protein AN0408 (749 aa).

The span at 1-11 (MEKSAAGDNID) shows a compositional bias: basic and acidic residues. A disordered region spans residues 1-21 (MEKSAAGDNIDKYSPSSIPDY). Residues 92-112 (WPFLLFVLGWITFLSVGYALT) form a helical membrane-spanning segment. Residues 280–471 (LCLSGGATFA…RTDIPIKALN (192 aa)) enclose the PNPLA domain. Residues 311–315 (GTSGG) carry the GXSXG motif. The Nucleophile role is filled by Ser313. Asp458 serves as the catalytic Proton acceptor. Positions 630-659 (SIQPFPFDNGAAGADQKSNDPREERLNRNF) are disordered. Residues 646–659 (KSNDPREERLNRNF) show a composition bias toward basic and acidic residues.

This sequence belongs to the PLPL family.

The protein resides in the membrane. Probable lipid hydrolase. This Emericella nidulans (strain FGSC A4 / ATCC 38163 / CBS 112.46 / NRRL 194 / M139) (Aspergillus nidulans) protein is Patatin-like phospholipase domain-containing protein AN0408.